The chain runs to 501 residues: E3 ubiquitin-protein ligase TRIM35 (501 aa).

Methionine 1 bears the N-acetylmethionine mark. Serine 8 carries the phosphoserine modification. Residues 21-61 (CAVCYDPFRDAVTLRCGHNFCRRCVSGCWEVQTTPSCPVCK) form an RING-type zinc finger. Residues 96-137 (RSPRPCRAHRAPLTLFCVEDKELLCCACQADARHQEHRVQPI) form a B box-type zinc finger. Residues cysteine 101, histidine 104, cysteine 123, and histidine 129 each coordinate Zn(2+). Residues 209–252 (MKEESRKKHLLAEEKMKQLAEQTEALAREIERLQMEMKEDDMTF) are a coiled coil. The region spanning 284–495 (LESLQYRVWK…LRICHLRVSI (212 aa)) is the B30.2/SPRY domain.

Interacts with PKM isoform M2, but not isoform M1; this interaction may compete with that between PKM and FGFR1, and hence reduces FGFR1-dependent tyrosine phosphorylation of PKM. Interacts with IRF7; this interaction promotes IRF7 proteasomal degradation. Interacts with TRAF3; this interaction promotes TRAF3 activation.

The protein resides in the cytoplasm. The protein localises to the nucleus. It catalyses the reaction S-ubiquitinyl-[E2 ubiquitin-conjugating enzyme]-L-cysteine + [acceptor protein]-L-lysine = [E2 ubiquitin-conjugating enzyme]-L-cysteine + N(6)-ubiquitinyl-[acceptor protein]-L-lysine.. It participates in protein modification; protein ubiquitination. E3 ubiquitin-protein ligase that participates in multiple biological processes including cell death, glucose metabolism, and in particular, the innate immune response. Mediates 'Lys-63'-linked polyubiquitination of TRAF3 thereby promoting type I interferon production via RIG-I signaling pathway. Can also catalyze 'Lys-48'-linked polyubiquitination and proteasomal degradation of viral proteins such as influenza virus PB2. Acts as a negative feedback regulator of TLR7- and TLR9-triggered signaling. Mechanistically, promotes the 'Lys-48'-linked ubiquitination of IRF7 and induces its degradation via a proteasome-dependent pathway. Reduces FGFR1-dependent tyrosine phosphorylation of PKM, inhibiting PKM-dependent lactate production, glucose metabolism, and cell growth. The chain is E3 ubiquitin-protein ligase TRIM35 (Trim35) from Rattus norvegicus (Rat).